A 558-amino-acid polypeptide reads, in one-letter code: MEFLGTTQTASYCGPKKVCGLQALPPAGQDPVVQECYQPFHLPGYRYLNAWRPSVFYKITTQQTCPEECSSSRRPPTILPSLRSALFCRYTQRDWDRSNDLQLRGAEASRLWAGRLTGDSLRIMQDKDQLIHQMQEGTSRNLNQRVCDIGFWKSELCYELDRLLTESNSMDTLKRRLECAAEEMNNPLQVALECLYNREKRIGIDLVHDNVEKNLIREVDLLKCCQDQMRKLAKRIDFQIRDNRDAQHALERDIEDKSSSQYIDESCFNLRNTSDSISFFHGMEKFDGTVSIPETWAKFSNDNIRHTQNMRANSIRLREEAEHLFETLSDQLWRQFTNTNLAFNARISEETDVKNKLQTQLAKILQEIFQAENTIMLLERAIVAKECPLKVAQTRLACRTRRPNVELCRDVSQFRLVNEVFTIDDTLQTLKLRLRETQDALQLLVMTKSRLEHELAIKANTLCIDKEKCMRMRKSFPSTPRLTGYTCSGIGSGPYTNQVPRVSSCGGGASCGGGLSCGGGVACGGGASCGGSAPCGGSALCSHPVSGSCPGSCFAPVC.

Residues 347 to 381 (ISEETDVKNKLQTQLAKILQEIFQAENTIMLLERA) adopt a coiled-coil conformation.

The protein belongs to the tektin family. As to quaternary structure, microtubule inner protein component of sperm flagellar doublet microtubules. Interacts with TEKT3. Post-translationally, ubiquitinated, leading to its degradation. Deubiquitinated by USP16, promoting its stability. Specifically expressed in testis.

It is found in the cytoplasm. Its subcellular location is the cytoskeleton. The protein resides in the flagellum axoneme. Functionally, sperm-specific microtubule inner protein (MIP) part of the dynein-decorated doublet microtubules (DMTs) in flagellar axoneme. Forms an extensive interaction network in different conformations that reinforces the helix bundle composed by other tektin proteins (TEKT1 to TEKT4) and MIPs to anchor the tektin bundle onto the tubulin wall of A-tubule of the sperm flagellum. The protein is Tektin-5 of Rattus norvegicus (Rat).